Here is a 385-residue protein sequence, read N- to C-terminus: MSRVLLVTNDFPPRRGGIQSYLGEFVGRLVGSRAHAMTVYAPQWKGADAFDDAARAAGYRVVRHPSTVMLPGPTVDVRMRRLIAEHDIETVWFGAAAPLALLAPRARLAGASRVLASTHGHEVGWSMLPVARSVLRRIGDGTDVVTFVSSYTRSRFASAFGPAASLEYLPPGVDTDRFRPDPAARAELRKRYRLGERPTVVCLSRLVPRKGQDTLVTALPSIRRRVDGAALVIVGGGPYLETLRKLAHDCGVADHVTFTGGVATDELPAHHALADVFAMPCRTRGAGMDVEGLGIVFLEASAAGVPVIAGNSGGAPETVQHNKTGLVVDGRSVDRVADAVAELLIDRDRAVAMGAAGREWVTAQWRWDTLAAKLADFLRGDDAAR.

GDP-alpha-D-mannose is bound by residues arginine 205, lysine 210, valine 262, and glutamate 299.

It belongs to the glycosyltransferase group 1 family. Glycosyltransferase 4 subfamily.

The enzyme catalyses a 1,2-diacyl-sn-glycero-3-phospho-[alpha-D-mannopyranosyl-(1&lt;-&gt;6)-D-myo-inositol] + GDP-alpha-D-mannose = a 2,6-O-bis(alpha-D-mannopyranosyl)-1-phosphatidyl-1D-myo-inositol + GDP + H(+). It catalyses the reaction a 1,2-diacyl-sn-glycero-3-phospho-[alpha-D-6-acyl-mannopyranosyl-(1&lt;-&gt;6)-D-myo-inositol] + GDP-alpha-D-mannose = a 2-O-(alpha-D-mannosyl)-6-O-(6-O-acyl-alpha-D-mannosyl)-1-phosphatidyl-1D-myo-inositol + GDP + H(+). It participates in phospholipid metabolism; phosphatidylinositol metabolism. Involved in the biosynthesis of phosphatidyl-myo-inositol mannosides (PIM) which are early precursors in the biosynthesis of lipomannans (LM) and lipoarabinomannans (LAM). Catalyzes the addition of a mannosyl residue from GDP-D-mannose (GDP-Man) to the position 6 of a phosphatidyl-myo-inositol bearing an alpha-1,2-linked mannose residue (PIM1) to generate phosphatidyl-myo-inositol bearing alpha-1,2- and alpha-1,6-linked mannose residues (Ac1PIM2). PimB also catalyzes the addition of a mannosyl residue from GDP-Man to the position 6 of phosphatidyl-myo-inositol bearing an acylated alpha-1,2-linked mannose residue (Ac1PIM1) to generate monoacylated phosphatidyl-myo-inositol bearing alpha-1,2- and alpha-1,6-linked mannose residues (Ac1PIM2). The addition of the second mannosyl residue by PimB preferentially occurs before the acylation of the mannosyl residue transferred by PimA. Also able to transfer a mannosyl residue from GDP-Man to the position 6 of a phosphatidyl-myo-inositol (PI), but this reaction is very slow. This Mycobacterium tuberculosis (strain CDC 1551 / Oshkosh) protein is GDP-mannose-dependent alpha-(1-6)-phosphatidylinositol monomannoside mannosyltransferase.